The following is a 286-amino-acid chain: Sulfate transport system permease protein CysW (286 aa).

The next 6 membrane-spanning stretches (helical) occupy residues 20–40, 74–94, 108–128, 145–165, 207–227, and 255–275; these read LLPLALIGISLLYVGLIIIIP, LMGVISVPLNTLFGLAAAFAI, VIDLPFSISPVVAGLMIVLLY, IIFAWPGMALATIFVSMPFVA, LYGVVLTTARALGEFGAVSVV, and YTAALLLGGISLVTLVLKALL. The ABC transmembrane type-1 domain maps to 69-272; it reads IRLTLLMGVI…GISLVTLVLK (204 aa).

The protein belongs to the binding-protein-dependent transport system permease family. CysTW subfamily. In terms of assembly, the complex is composed of two ATP-binding proteins (CysA), two transmembrane proteins (CysT and CysW) and a solute-binding protein (CysP).

The protein resides in the cell inner membrane. Functionally, part of the ABC transporter complex CysAWTP (TC 3.A.1.6.1) involved in sulfate/thiosulfate import. Probably responsible for the translocation of the substrate across the membrane. The protein is Sulfate transport system permease protein CysW (cysW) of Synechococcus elongatus (strain ATCC 33912 / PCC 7942 / FACHB-805) (Anacystis nidulans R2).